We begin with the raw amino-acid sequence, 927 residues long: Dual serine/threonine and tyrosine protein kinase (927 aa).

The tract at residues 1–21 (MEADGQSWAGESVSGPGPGGG) is disordered. Residues 393 to 429 (RKKENELYESLMNIANRKQEEMKDMIVETLNTMKEEL) adopt a coiled-coil conformation. A Protein kinase domain is found at 650–904 (PKLGQELGRG…PLLGIVQPML (255 aa)). Residues 656–664 (LGRGQYGVV) and lysine 679 contribute to the ATP site. Aspartate 775 acts as the Proton acceptor in catalysis.

It belongs to the protein kinase superfamily. Ser/Thr protein kinase family. As to expression, expressed in brain, heart, skeletal muscle, kidney and lung. Expressed in maturing tubular epithelia, with the most prominent expression in the medulla and the papilla. Expressed in thin ascending limb of the loop of Henle and the distal convoluted tubule. Expressed in all layers of transitional ureteric epithelium and in the ureteric smooth-muscle cells (at protein level). Widely expressed. Highly expressed in many brain regions, including in cerebellum, olfactory, hippocampus and cerebral cortex.

It is found in the cytoplasm. The protein localises to the cell membrane. It localises to the apical cell membrane. The protein resides in the basolateral cell membrane. Its subcellular location is the cell junction. The catalysed reaction is L-seryl-[protein] + ATP = O-phospho-L-seryl-[protein] + ADP + H(+). The enzyme catalyses L-threonyl-[protein] + ATP = O-phospho-L-threonyl-[protein] + ADP + H(+). It catalyses the reaction L-tyrosyl-[protein] + ATP = O-phospho-L-tyrosyl-[protein] + ADP + H(+). In terms of biological role, acts as a positive regulator of ERK phosphorylation downstream of fibroblast growth factor-receptor activation. Involved in the regulation of both caspase-dependent apoptosis and caspase-independent cell death. In the skin, it plays a predominant role in suppressing caspase-dependent apoptosis in response to UV stress in a range of dermal cell types. This Mus musculus (Mouse) protein is Dual serine/threonine and tyrosine protein kinase (Dstyk).